A 193-amino-acid chain; its full sequence is Sarcoplasmic calcium-binding protein, alpha chain (193 aa).

2 igE-binding epitope regions span residues 10–36 (KYVVRYMYDIDNNGFLDKNDFECLAVR) and 49–72 (DAYANNQKIMRNLWNEIAELADFN). 3 consecutive EF-hand domains span residues 16-40 (MYDIDNNGFLDKNDFECLAVRNTLI), 57-92 (IMRNLWNEIAELADFNKDGEVTVDEFKQAVQKHCQG), and 101-136 (AFKVFIANQFKAIDVNGDGKVGLDEYRLDCITRSAF). The Ca(2+) site is built by D18, D20, N22, D29, D70, N72, D74, E76, E81, D114, N116, D118, K120, and E125. The tract at residues 130-147 (CITRSAFAEVKEIDDAYN) is igE-binding epitope.

SCPs from crayfish, lobster, and shrimp are polymorphic dimers; three isotypes (alpha-alpha, alpha-beta, and beta-beta) have been identified. As to expression, expressed in tail muscle (at protein level).

Functionally, like parvalbumins, SCPs seem to be more abundant in fast contracting muscles, but no functional relationship can be established from this distribution. The chain is Sarcoplasmic calcium-binding protein, alpha chain from Penaeus vannamei (Whiteleg shrimp).